Reading from the N-terminus, the 231-residue chain is MKKNKKVVVLLSAGLDSTVNAYEAIKHHHEIVLALTFNYGQRAAKKELEASANIAKHLGIPHKVVELPWFKDFNKSSLLVEDQAVPTGSAVEIDNQQKSEETAKSVWVPNRNGIFLNIAAAYAEALGADAVIPGFNAEEAATFPDNSREFLEQATKSLWYSTSNHVTVGCYTAHLKKPDIVRLGQGLKVPWELIWPCYFSGDKWCGQCESCLRSKRAFASANIDVKHLFKE.

11–21 (LSAGLDSTVNA) contacts ATP. Zn(2+) is bound by residues Cys197, Cys205, Cys208, and Cys211.

The protein belongs to the QueC family. Zn(2+) serves as cofactor.

It catalyses the reaction 7-carboxy-7-deazaguanine + NH4(+) + ATP = 7-cyano-7-deazaguanine + ADP + phosphate + H2O + H(+). It participates in purine metabolism; 7-cyano-7-deazaguanine biosynthesis. Its function is as follows. Catalyzes the ATP-dependent conversion of 7-carboxy-7-deazaguanine (CDG) to 7-cyano-7-deazaguanine (preQ(0)). The chain is 7-cyano-7-deazaguanine synthase from Bdellovibrio bacteriovorus (strain ATCC 15356 / DSM 50701 / NCIMB 9529 / HD100).